A 675-amino-acid polypeptide reads, in one-letter code: Heat shock 70 kDa protein 12A (675 aa).

The span at 1-13 (MADKEAGGSDGPR) shows a compositional bias: basic and acidic residues. The interval 1–45 (MADKEAGGSDGPRETAPTSAYSSPARSLGDTGITPLSPSHIVNDT) is disordered. Ala-2 is subject to N-acetylalanine. 2 stretches are compositionally biased toward polar residues: residues 16 to 25 (APTSAYSSPA) and 34 to 45 (TPLSPSHIVNDT).

This sequence belongs to the heat shock protein 70 family. Interacts with SORL1 (via cytosolic C-terminus); this interaction affects SORL1 internalization and subcellular localization. Widely expressed with highest levels in brain, kidney and muscle.

It localises to the cytoplasm. The protein resides in the nucleus. In terms of biological role, adapter protein for SORL1, but not SORT1. Delays SORL1 internalization and affects SORL1 subcellular localization. This Homo sapiens (Human) protein is Heat shock 70 kDa protein 12A (HSPA12A).